The sequence spans 255 residues: Imidazole glycerol phosphate synthase subunit HisF (255 aa).

Catalysis depends on residues aspartate 12 and aspartate 131.

It belongs to the HisA/HisF family. Heterodimer of HisH and HisF.

It localises to the cytoplasm. It catalyses the reaction 5-[(5-phospho-1-deoxy-D-ribulos-1-ylimino)methylamino]-1-(5-phospho-beta-D-ribosyl)imidazole-4-carboxamide + L-glutamine = D-erythro-1-(imidazol-4-yl)glycerol 3-phosphate + 5-amino-1-(5-phospho-beta-D-ribosyl)imidazole-4-carboxamide + L-glutamate + H(+). It participates in amino-acid biosynthesis; L-histidine biosynthesis; L-histidine from 5-phospho-alpha-D-ribose 1-diphosphate: step 5/9. Functionally, IGPS catalyzes the conversion of PRFAR and glutamine to IGP, AICAR and glutamate. The HisF subunit catalyzes the cyclization activity that produces IGP and AICAR from PRFAR using the ammonia provided by the HisH subunit. This is Imidazole glycerol phosphate synthase subunit HisF from Neisseria meningitidis serogroup C (strain 053442).